Here is a 320-residue protein sequence, read N- to C-terminus: Protein HEXIM1 (320 aa).

The interval 1–124 is disordered; sequence MAEPLLSEFQ…RRRPSKKKRL (124 aa). Polar residues predominate over residues 9 to 19; sequence FQHQPQTSNCT. Basic and acidic residues predominate over residues 24 to 47; that stretch reads VHEERNPDRPPGAEERVPEEDSRW. Serine 98 is subject to Phosphoserine. Residues 109–124 are compositionally biased toward basic residues; that stretch reads VGKKKHRRRPSKKKRL. The segment at 111–138 is basic region; mediates nuclear localization and interaction with 7SK snRNA and NR3C1; the sequence is KKKHRRRPSKKKRLWKPYYTLTWEEKKK. The segment at 163-166 is interaction with P-TEFb; the sequence is PYNT. The segment at 171-211 is autoinhibitory acidic region; in absence of 7SK snRNA interacts with the basic region preventing interaction with P-TEFb and modulating subcellular localization; it reads MDDHDQEEPDLKTGLYPKRAAAKSDDTSDEDFMEEAGEEDG. The tract at residues 174-223 is disordered; the sequence is HDQEEPDLKTGLYPKRAAAKSDDTSDEDFMEEAGEEDGGSDGMGGDGSEF. Serine 194 carries the phosphoserine modification. A Phosphothreonine modification is found at threonine 197. A compositionally biased stretch (acidic residues) spans 197–212; the sequence is TSDEDFMEEAGEEDGG. 3 positions are modified to phosphoserine: serine 198, serine 213, and serine 221. Residues 244-310 adopt a coiled-coil conformation; the sequence is SKQELIKEYL…LTENELHRQQ (67 aa). Positions 247–275 are mediates interaction with CCNT1; that stretch reads ELIKEYLELEKCLSRMEDENNRLRLESQR. The tract at residues 271–316 is required for inhibition of ESR1-dependent transcription; the sequence is LESQRLDGDDARVRELELELDRLRAENLQLLTENELHRQQERAPLS.

It belongs to the HEXIM family. In terms of assembly, homooligomer and heterooligomer with HEXIM2; probably dimeric. Core component of the 7SK RNP complex, at least composed of 7SK RNA, LARP7, MEPCE, HEXIM1 (or HEXIM2) and P-TEFb (composed of CDK9 and CCNT1/cyclin-T1). Interacts with the N-CoR complex through NCOR1. Interacts with ESR1 and NR3C1. May interact with NF-kappa-B through RELA. Interacts with CCNT2; mediates formation of a tripartite complex with KPNA2. Part of the HDP-RNP complex composed of at least HEXIM1, PRKDC, XRCC5, XRCC6, paraspeckle proteins (SFPQ, NONO, PSPC1, RBM14, and MATR3) and NEAT1 non-coding RNA.

It localises to the nucleus. Its subcellular location is the cytoplasm. Functionally, transcriptional regulator which functions as a general RNA polymerase II transcription inhibitor. Core component of the 7SK RNP complex: in cooperation with 7SK snRNA sequesters P-TEFb in a large inactive 7SK snRNP complex preventing RNA polymerase II phosphorylation and subsequent transcriptional elongation. May also regulate NF-kappa-B, ESR1, NR3C1 and CIITA-dependent transcriptional activity. Plays a role in the regulation of DNA virus-mediated innate immune response by assembling into the HDP-RNP complex, a complex that serves as a platform for IRF3 phosphorylation and subsequent innate immune response activation through the cGAS-STING pathway. This Bos taurus (Bovine) protein is Protein HEXIM1 (HEXIM1).